Reading from the N-terminus, the 392-residue chain is Nuclear speckle splicing regulatory protein 1 homolog (392 aa).

Disordered stretches follow at residues 1–73, 113–169, and 187–357; these read MASK…IFDY, RQLE…AFND, and LLND…ARLD. Basic and acidic residues-rich tracts occupy residues 54–65, 113–132, 149–160, 205–238, and 313–357; these read KAAEREHQKAEA, RQLE…REKE, KQQEEVKKHREQ, QKNV…KSIY, and KSIE…ARLD. Residues 76–132 are a coiled coil; that stretch reads NYDEIQAIKNEKKEEARKADKNRESKYAENIIKAHARRQLEQFSREERQQLREREKE.

It belongs to the NSRP1 family. As to expression, expressed in the intestine, nervous system and head neurons in both larvae and adults. Expressed in the distal tip cell.

It localises to the cytoplasm. It is found in the nucleus. In terms of biological role, required for the cessation of distal tip cell migration at the end of larval morphogenesis. The polypeptide is Nuclear speckle splicing regulatory protein 1 homolog (ccdc-55) (Caenorhabditis elegans).